The chain runs to 233 residues: Type IV secretion system protein PtlE homolog (233 aa).

Residues Val42–Pro62 traverse the membrane as a helical segment.

The protein belongs to the virB8 family.

The protein resides in the cell inner membrane. The polypeptide is Type IV secretion system protein PtlE homolog (ptlE) (Bordetella parapertussis (strain 12822 / ATCC BAA-587 / NCTC 13253)).